Here is an 887-residue protein sequence, read N- to C-terminus: Exocyst complex component SEC3A (887 aa).

Coiled coils occupy residues 221 to 248 (IGEA…AILE) and 281 to 301 (LRHM…LEMQ). The interval 542–581 (GAGNDKKSQSNNDDGNDDDDLGIMDIDETDKKPGKNSPDL) is disordered. Residues 555–569 (DGNDDDDLGIMDIDE) show a composition bias toward acidic residues.

It belongs to the SEC3 family. In terms of assembly, the exocyst complex is composed of SEC3, SEC5, SEC6, SEC8, SEC10, EXO70A1 and EXO84B. Interacts with EXO70A1, SEC5A and ICR1, but not with ICR2. Binds to EXO70H1. Binds directly to B1L. In terms of tissue distribution, widely expressed. Preferentially expressed in tissues containing dividing and expanding cells, such as the shoot apical meristem, root tip, lateral root primordia and developing embryos.

Its subcellular location is the cytoplasm. The protein resides in the cytosol. It is found in the cell membrane. It localises to the cytoskeleton. The protein localises to the phragmoplast. Its subcellular location is the secreted. The protein resides in the extracellular exosome. Component of the exocyst complex involved in the docking of exocytic vesicles with fusion sites on the plasma membrane during regulated or polarized secretion. Involved in polarized cell growth and organ morphogenesis. During cytokinesis, involved in cell plate initiation, cell plate maturation and formation of new primary cell wall. During cytokinesis, involved in cell plate initiation, cell plate maturation and formation of new primary cell wall. The polypeptide is Exocyst complex component SEC3A (Arabidopsis thaliana (Mouse-ear cress)).